Reading from the N-terminus, the 141-residue chain is Large ribosomal subunit protein uL16 (141 aa).

Positions 1 to 17 are enriched in basic residues; it reads MLQPKRTKYRKVQKGKM. The segment at 1-29 is disordered; it reads MLQPKRTKYRKVQKGKMKGNSQRGHELSN.

It belongs to the universal ribosomal protein uL16 family. Part of the 50S ribosomal subunit.

Its function is as follows. Binds 23S rRNA and is also seen to make contacts with the A and possibly P site tRNAs. This chain is Large ribosomal subunit protein uL16, found in Flavobacterium psychrophilum (strain ATCC 49511 / DSM 21280 / CIP 103535 / JIP02/86).